The primary structure comprises 315 residues: Protoheme IX farnesyltransferase (315 aa).

The next 9 helical transmembrane spans lie at 21–41 (YFALLKPRVMSLVVFTALVGL), 52–74 (VGFCAILFIAVGAGASGALNMWW), 98–118 (GEALALGLGLSGLSVVMLALA), 121–141 (LLAAGLLAFTIFFYAVVYSMW), 150–170 (IVIGGAAGAFPPMIGWVAATG), 177–197 (VLMFALIFMWTPPHFWALALF), 223–243 (ILVYTVLLVPVALGLALTPVA), 246–266 (LYLATALVLNAIFLKGAWDIW), and 284–304 (FFKFSLLYLALHFTALLAEAI).

This sequence belongs to the UbiA prenyltransferase family. Protoheme IX farnesyltransferase subfamily. As to quaternary structure, interacts with CtaA.

The protein resides in the cell inner membrane. It carries out the reaction heme b + (2E,6E)-farnesyl diphosphate + H2O = Fe(II)-heme o + diphosphate. It functions in the pathway porphyrin-containing compound metabolism; heme O biosynthesis; heme O from protoheme: step 1/1. Functionally, converts heme B (protoheme IX) to heme O by substitution of the vinyl group on carbon 2 of heme B porphyrin ring with a hydroxyethyl farnesyl side group. This Dinoroseobacter shibae (strain DSM 16493 / NCIMB 14021 / DFL 12) protein is Protoheme IX farnesyltransferase.